We begin with the raw amino-acid sequence, 136 residues long: Cytochrome c oxidase subunit 13, mitochondrial (136 aa).

The N-terminal 29 residues, 1-29 (MFAQRQMFFARLAANLRAPAVRQTVQRRF), are a transit peptide targeting the mitochondrion. At 30–62 (ASTPANESGKNAFVREREAVKQHAAETTELWRK) the chain is on the mitochondrial matrix side. A helical transmembrane segment spans residues 63–83 (ISLYGIPPALALAGYNAYTLY). Topologically, residues 84-136 (NEHWEHWSHLPPLEERTEYPYQNIRTRNYPWGDGDKTLFWNESVNYHNRDKVT) are mitochondrial intermembrane.

It belongs to the cytochrome c oxidase subunit 6A family. As to quaternary structure, component of the cytochrome c oxidase (complex IV, CIV), a multisubunit enzyme composed of 11 subunits. The complex is composed of a catalytic core of 3 subunits Cox1, Cox2 and Cox3, encoded in the mitochondrial DNA, and 8 supernumerary subunits Cox4, Cox5a/Cox5, Cox6, Cox7, Cox8, Cox7a/Cox9, Cox6b/Cox12 and Cox6a/Cox13, which are encoded in the nuclear genome. The complex exists as a monomer or a dimer and forms respiratory supercomplexes (SCs) in the inner mitochondrial membrane with NADH-ubiquinone oxidoreductase (complex I, CI) and ubiquinol-cytochrome c oxidoreductase (cytochrome b-c1 complex, complex III, CIII), resulting in various different assemblies (supercomplexes I(1)IV(1), I(1)III(3)IV(2), III(2)IV(1) and III(2)IV(2) as well as larger supercomplexes of compositions like I(1)III(2)IV(5-6)). Cox6a/Cox13 was not present in the cryo-EM structure. It may be involved in complex IV dimer formation and might not be always expressed. This would explain its absence in the map of the isolated monomer.

Its subcellular location is the mitochondrion inner membrane. It participates in energy metabolism; oxidative phosphorylation. Its function is as follows. Component of the cytochrome c oxidase, the last enzyme in the mitochondrial electron transport chain which drives oxidative phosphorylation. The respiratory chain contains 3 multisubunit complexes succinate dehydrogenase (complex II, CII), ubiquinol-cytochrome c oxidoreductase (cytochrome b-c1 complex, complex III, CIII) and cytochrome c oxidase (complex IV, CIV), that cooperate to transfer electrons derived from NADH and succinate to molecular oxygen, creating an electrochemical gradient over the inner membrane that drives transmembrane transport and the ATP synthase. Cytochrome c oxidase is the component of the respiratory chain that catalyzes the reduction of oxygen to water. Electrons originating from reduced cytochrome c in the intermembrane space (IMS) are transferred via the dinuclear copper A center (CU(A)) of Cox2 and heme A of Cox1 to the active site in Cox1, a binuclear center (BNC) formed by heme A3 and copper B (CU(B)). The BNC reduces molecular oxygen to 2 water molecules using 4 electrons from cytochrome c in the IMS and 4 protons from the mitochondrial matrix. In Neurospora crassa (strain ATCC 24698 / 74-OR23-1A / CBS 708.71 / DSM 1257 / FGSC 987), this protein is Cytochrome c oxidase subunit 13, mitochondrial (eat-5).